A 105-amino-acid chain; its full sequence is Cuticle protein AM1159 (105 aa).

Positions 16 to 81 (DGNFNYNFQT…PESPLLPVGP (66 aa)) constitute a Chitin-binding type R&amp;R domain. A disordered region spans residues 25–46 (TSNGIEDTKTGTPGSQGQSNMQ).

In terms of tissue distribution, arthrodial membrane.

The polypeptide is Cuticle protein AM1159 (Cancer pagurus (Rock crab)).